The following is a 785-amino-acid chain: Penicillin-binding protein 1A (785 aa).

The Cytoplasmic segment spans residues 1 to 6 (MYKSLF). The chain crosses the membrane as a helical; Signal-anchor for type II membrane protein span at residues 7–27 (FFLKIFAILILLGCSVTAYII). Over 28-785 (YHYSHDLPDY…GISDQSQEIY (758 aa)) the chain is Periplasmic. The segment at 49 to 220 (TRIYSRDGKL…SELNPDKNYS (172 aa)) is transglycosylase. Residue Glu87 is the Proton donor; for transglycosylase activity of the active site. The interval 398–711 (DVIVVEPIKD…SNVVLPIFID (314 aa)) is transpeptidase. The active-site Acyl-ester intermediate; for transpeptidase activity is Ser457.

In the N-terminal section; belongs to the glycosyltransferase 51 family. The protein in the C-terminal section; belongs to the transpeptidase family.

Its subcellular location is the cell inner membrane. It carries out the reaction [GlcNAc-(1-&gt;4)-Mur2Ac(oyl-L-Ala-gamma-D-Glu-L-Lys-D-Ala-D-Ala)](n)-di-trans,octa-cis-undecaprenyl diphosphate + beta-D-GlcNAc-(1-&gt;4)-Mur2Ac(oyl-L-Ala-gamma-D-Glu-L-Lys-D-Ala-D-Ala)-di-trans,octa-cis-undecaprenyl diphosphate = [GlcNAc-(1-&gt;4)-Mur2Ac(oyl-L-Ala-gamma-D-Glu-L-Lys-D-Ala-D-Ala)](n+1)-di-trans,octa-cis-undecaprenyl diphosphate + di-trans,octa-cis-undecaprenyl diphosphate + H(+). The enzyme catalyses Preferential cleavage: (Ac)2-L-Lys-D-Ala-|-D-Ala. Also transpeptidation of peptidyl-alanyl moieties that are N-acyl substituents of D-alanine.. It functions in the pathway cell wall biogenesis; peptidoglycan biosynthesis. In terms of biological role, cell wall formation. Synthesis of cross-linked peptidoglycan from the lipid intermediates. The enzyme has a penicillin-insensitive transglycosylase N-terminal domain (formation of linear glycan strands) and a penicillin-sensitive transpeptidase C-terminal domain (cross-linking of the peptide subunits). This Rickettsia typhi (strain ATCC VR-144 / Wilmington) protein is Penicillin-binding protein 1A (mrcA).